A 185-amino-acid polypeptide reads, in one-letter code: Somatotropin (185 aa).

A disulfide bridge connects residues cysteine 52 and cysteine 158. Glutamate 167 is a Zn(2+) binding site. Cysteines 175 and 183 form a disulfide.

This sequence belongs to the somatotropin/prolactin family.

The protein localises to the secreted. Growth hormone plays an important role in growth control and is involved in the regulation of several anabolic processes. Implicated as an osmoregulatory substance important for seawater adaptation. The protein is Somatotropin (gh) of Katsuwonus pelamis (Skipjack tuna).